The following is a 356-amino-acid chain: Biotin synthase (356 aa).

The Radical SAM core domain maps to 51-270; sequence NKVQCNQLLN…IALARIMMPL (220 aa). Cysteine 66, cysteine 70, and cysteine 73 together coordinate [4Fe-4S] cluster. 4 residues coordinate [2Fe-2S] cluster: cysteine 110, cysteine 141, cysteine 201, and arginine 274. The interval 310–356 is disordered; the sequence is PGDNKDRSLFDRLGLEPRDDHGVHEHSSHSHTHDQGHDHGPHGHSHG. The span at 312 to 350 shows a compositional bias: basic and acidic residues; sequence DNKDRSLFDRLGLEPRDDHGVHEHSSHSHTHDQGHDHGP.

The protein belongs to the radical SAM superfamily. Biotin synthase family. Homodimer. [4Fe-4S] cluster serves as cofactor. The cofactor is [2Fe-2S] cluster.

It catalyses the reaction (4R,5S)-dethiobiotin + (sulfur carrier)-SH + 2 reduced [2Fe-2S]-[ferredoxin] + 2 S-adenosyl-L-methionine = (sulfur carrier)-H + biotin + 2 5'-deoxyadenosine + 2 L-methionine + 2 oxidized [2Fe-2S]-[ferredoxin]. It participates in cofactor biosynthesis; biotin biosynthesis; biotin from 7,8-diaminononanoate: step 2/2. Its function is as follows. Catalyzes the conversion of dethiobiotin (DTB) to biotin by the insertion of a sulfur atom into dethiobiotin via a radical-based mechanism. The sequence is that of Biotin synthase from Rhodopseudomonas palustris (strain BisB18).